The sequence spans 355 residues: Phenylalanine--tRNA ligase alpha subunit (355 aa).

Mg(2+) is bound at residue Glu-273.

This sequence belongs to the class-II aminoacyl-tRNA synthetase family. Phe-tRNA synthetase alpha subunit type 1 subfamily. In terms of assembly, tetramer of two alpha and two beta subunits. It depends on Mg(2+) as a cofactor.

The protein resides in the cytoplasm. It carries out the reaction tRNA(Phe) + L-phenylalanine + ATP = L-phenylalanyl-tRNA(Phe) + AMP + diphosphate + H(+). This Bifidobacterium longum subsp. infantis (strain ATCC 15697 / DSM 20088 / JCM 1222 / NCTC 11817 / S12) protein is Phenylalanine--tRNA ligase alpha subunit.